The primary structure comprises 403 residues: Zinc finger HIT domain-containing protein 2 (403 aa).

M1 carries the N-acetylmethionine modification. Zn(2+) is bound by residues C7, C10, C22, C25, C30, C34, H38, and C41. The HIT-type zinc-finger motif lies at 7–41 (CGFCPAGEVQPARYTCPRCNAPYCSLRCYRTHGTC). The tract at residues 72–98 (RQQRETEDEPGEAGLSSGPAPGGLSGL) is disordered. T161 is modified (phosphothreonine).

As to quaternary structure, interacts (via HIT-type zinc finger) with RUVBL2 in the presence of ATP or ADP; shows a stronger interaction in the presence of ADP. In terms of tissue distribution, low expression in most tissues; highly expressed in testis.

May act as a bridging factor mediating the interaction between the R2TP/Prefoldin-like (R2TP/PFDL) complex and U5 small nuclear ribonucleoprotein (U5 snRNP). Required for the interaction of R2TP complex subunit RPAP3 and prefoldin-like subunit URI1 with U5 snRNP proteins EFTUD2 and PRPF8. May play a role in regulating the composition of the U5 snRNP complex. The sequence is that of Zinc finger HIT domain-containing protein 2 (ZNHIT2) from Homo sapiens (Human).